The chain runs to 442 residues: F-box only protein 39 (442 aa).

Residues Trp16–Ile61 enclose the F-box domain.

In terms of assembly, directly interacts with SKP1 and CUL1.

Functionally, substrate-recognition component of the SCF (SKP1-CUL1-F-box protein)-type E3 ubiquitin ligase complex. This chain is F-box only protein 39 (FBXO39), found in Homo sapiens (Human).